Consider the following 148-residue polypeptide: Small ribosomal subunit protein bS6 (148 aa).

Residues 96–148 (HEEGQSAMLTRRDDRRERDGDDRPRRREGGFDRGDRGDRGPRRPRDTEAGEGA) are disordered.

The protein belongs to the bacterial ribosomal protein bS6 family.

Functionally, binds together with bS18 to 16S ribosomal RNA. The polypeptide is Small ribosomal subunit protein bS6 (Brucella canis (strain ATCC 23365 / NCTC 10854 / RM-666)).